A 500-amino-acid polypeptide reads, in one-letter code: MIIGYVIGQATTQEALILAERPVRLGTYVVLEYDNVKALGLITNVTRGSPMLDDNMNDIEIVQRLKQFNNSIPVYTKAKVKMLCDMNNHFLMPDIPPFAGTPAREAEDEELKSIYSQDGQIRIGSLIGKNVEVKLNINSFARHLAILAATGSGKSNTVAVLSQRISELGGSVLIFDYHGEYYDSDIKNLNRIEPKLNPLYMTPREFSTLLEIRENAIIQYRILRRAFIKVTNGIREKLKEGQIPFSTLNSQFYELMKDELETQGNSDKKSSAKDEVLNKFEEFMDRYSNVIDLTSSDIIEKVKRGKVNVVSLTQLDEDSMDAVVSHYLRRILDSRKDFKRSKNSGLKFPIIAVIEEAHVFLSKNENTLTKYWASRIAREGRKFGVGLTIVSQRPKGLDENILSQMTNKIILKIIEPTDKKYILESSDNLSEDLAEQLSSLDVGEAIIIGKIVKLPAVVKIDMFEGKLLGSDPDMIGEWKKVEESEKIAKGFADFGTEIGD.

Residues Arg142, 151–156 (GSGKSN), and 459–460 (KI) each bind ATP.

Belongs to the HerA family. As to quaternary structure, homohexamer. Forms a complex with NurA.

The catalysed reaction is Couples ATP hydrolysis with the unwinding of duplex DNA at the replication fork by translocating in the 5'-3' direction. This creates two antiparallel DNA single strands (ssDNA). The leading ssDNA polymer is the template for DNA polymerase III holoenzyme which synthesizes a continuous strand.. It carries out the reaction ATP + H2O = ADP + phosphate + H(+). The enzyme catalyses Couples ATP hydrolysis with the unwinding of duplex DNA by translocating in the 3'-5' direction.. With respect to regulation, ATPase activity is stimulated in the presence of linear double-stranded (ds)DNA. Helicase activity requires the presence of NurA. LhrC-Core (Hel112) inhibits the exonuclease activity of the HerA-NurA complex on ss- and dsDNA, has no effect on the nicking activity of NurA. In terms of biological role, involved in DNA double-strand break (DSB) repair. Probably acts with NurA to stimulate resection of the 5' strand and produce the long 3' single-strand that is required for RadA loading. NurA and HerA together stimulate the end-resection of six nucleotides of a linear DNA substrate. Has DNA-dependent ATPase activity and bidirectional DNA helicase activity. Preferentially binds single stranded (ss)DNA, bubble and semiforked DNA substrate over other DNA molecules tested. Stimulates the exo- but not endonuclease activity of NurA. This chain is DNA double-strand break repair helicase HerA, found in Saccharolobus solfataricus (strain ATCC 35092 / DSM 1617 / JCM 11322 / P2) (Sulfolobus solfataricus).